The sequence spans 233 residues: Large ribosomal subunit protein uL1 (233 aa).

The protein belongs to the universal ribosomal protein uL1 family. In terms of assembly, part of the 50S ribosomal subunit.

In terms of biological role, binds directly to 23S rRNA. The L1 stalk is quite mobile in the ribosome, and is involved in E site tRNA release. Functionally, protein L1 is also a translational repressor protein, it controls the translation of the L11 operon by binding to its mRNA. The polypeptide is Large ribosomal subunit protein uL1 (Psychrobacter cryohalolentis (strain ATCC BAA-1226 / DSM 17306 / VKM B-2378 / K5)).